We begin with the raw amino-acid sequence, 243 residues long: Ice-binding protein K3-B1 (243 aa).

Residues 1–20 (MFSASSLLAVIALAISSVSA) form the signal peptide.

Belongs to the ice-binding protein family.

In terms of biological role, binds to the surface of ice crystals. Has low thermal hysteresis (TH) activity, which is the ability to lower the freezing point of an aqueous solution below its melting point. The TH activity of this protein is approximately 0.3 degrees Celsius at 11 mM. This chain is Ice-binding protein K3-B1, found in Typhula ishikariensis (Gray snow mold fungus).